We begin with the raw amino-acid sequence, 377 residues long: NADH dehydrogenase [ubiquinone] 1 alpha subcomplex subunit 9, mitochondrial (377 aa).

A mitochondrion-targeting transit peptide spans M1–Q35. K175 is modified (N6-succinyllysine). N6-acetyllysine occurs at positions 189 and 370.

Belongs to the complex I NDUFA9 subunit family. In terms of assembly, complex I is composed of 45 different subunits. This a component of the hydrophobic protein fraction. Interacts with BLOC1S1. Interacts with SLC2A4. Interacts with CLOCK. Interacts with RAB5IF. It depends on FAD as a cofactor. Acetylated on lysine residues. BLOC1S1 is required for acetylation. Acetylated by CLOCK in a circadian manner.

Its subcellular location is the mitochondrion matrix. In terms of biological role, accessory subunit of the mitochondrial membrane respiratory chain NADH dehydrogenase (Complex I), that is believed not to be involved in catalysis. Required for proper complex I assembly. Complex I functions in the transfer of electrons from NADH to the respiratory chain. The immediate electron acceptor for the enzyme is believed to be ubiquinone. In Homo sapiens (Human), this protein is NADH dehydrogenase [ubiquinone] 1 alpha subcomplex subunit 9, mitochondrial (NDUFA9).